The sequence spans 379 residues: Anhydro-N-acetylmuramic acid kinase (379 aa).

Residue 9-16 (GTSVDGID) participates in ATP binding.

It belongs to the anhydro-N-acetylmuramic acid kinase family.

It carries out the reaction 1,6-anhydro-N-acetyl-beta-muramate + ATP + H2O = N-acetyl-D-muramate 6-phosphate + ADP + H(+). Its pathway is amino-sugar metabolism; 1,6-anhydro-N-acetylmuramate degradation. It participates in cell wall biogenesis; peptidoglycan recycling. Functionally, catalyzes the specific phosphorylation of 1,6-anhydro-N-acetylmuramic acid (anhMurNAc) with the simultaneous cleavage of the 1,6-anhydro ring, generating MurNAc-6-P. Is required for the utilization of anhMurNAc either imported from the medium or derived from its own cell wall murein, and thus plays a role in cell wall recycling. In Acaryochloris marina (strain MBIC 11017), this protein is Anhydro-N-acetylmuramic acid kinase.